A 609-amino-acid polypeptide reads, in one-letter code: Frizzled and smoothened-like protein E (609 aa).

Positions 1-20 are cleaved as a signal peptide; sequence MEMIRIFLIYLILKIIIING. Topologically, residues 21-259 are extracellular; it reads ENNEYSKGYG…QWKRVYDMAK (239 aa). An FZ domain is found at 35 to 192; the sequence is FPGSKCLNYV…GLYKVPCIDP (158 aa). Intrachain disulfides connect cysteine 40–cysteine 118, cysteine 53–cysteine 111, cysteine 100–cysteine 149, and cysteine 138–cysteine 189. Residues asparagine 75, asparagine 130, asparagine 172, asparagine 198, asparagine 217, and asparagine 245 are each glycosylated (N-linked (GlcNAc...) asparagine). Residues 260-280 traverse the membrane as a helical segment; it reads TLSSISFICACYNILTFGILN. The Cytoplasmic portion of the chain corresponds to 281–288; sequence RKRKSKYN. The helical transmembrane segment at 289-309 threads the bilayer; it reads ICITLMSTSIALVYLTDIIKF. At 310–337 the chain is on the extracellular side; sequence GYGIEEFLCPEPGRSAVQNDAACGITGA. Residues 338–358 form a helical membrane-spanning segment; the sequence is MFHFGITYCCCWAMTMSIVLF. Over 359 to 365 the chain is Cytoplasmic; it reads CSVKRIK. Residues 366–386 traverse the membrane as a helical segment; it reads LFYFRHFMIGNTIFTIITTVI. At 387–408 the chain is on the extracellular side; it reads LLSAKKMVAGTGYIECWVRERW. Residues 409–429 form a helical membrane-spanning segment; that stretch reads FVITLFWLPCGIGLSIGIFCI. The Cytoplasmic segment spans residues 430 to 457; the sequence is GGVIHEIYNISKKVNIRESEFILRQIKP. A helical transmembrane segment spans residues 458 to 478; it reads FSLVFSVAGSFLYLFIFFFDV. Over 479–511 the chain is Extracellular; that stretch reads ERKIDSYKAAVADYVLCLLSGGSEETCFTTGPN. The chain crosses the membrane as a helical span at residues 512-532; it reads YASFFIFYFFIRVFGVLFFSI. Over 533–609 the chain is Cytoplasmic; it reads YGTSRVARDI…DSKSIELEKK (77 aa). The span at 559 to 570 shows a compositional bias: polar residues; it reads ESGISRNNSRTD. The disordered stretch occupies residues 559-609; it reads ESGISRNNSRTDISFGKNNNSKNSNNSKNSNNSKNSNNSDNDSKSIELEKK. A compositionally biased stretch (low complexity) spans 575–598; that stretch reads KNNNSKNSNNSKNSNNSKNSNNSD. Residues 599–609 are compositionally biased toward basic and acidic residues; that stretch reads NDSKSIELEKK.

This sequence belongs to the G-protein coupled receptor Fz/Smo family.

Its subcellular location is the membrane. The chain is Frizzled and smoothened-like protein E (fslE) from Dictyostelium discoideum (Social amoeba).